A 286-amino-acid chain; its full sequence is Energy-coupling factor transporter ATP-binding protein EcfA2 (286 aa).

An ABC transporter domain is found at isoleucine 3–glutamate 246. Position 40-47 (glycine 40–serine 47) interacts with ATP.

This sequence belongs to the ABC transporter superfamily. Energy-coupling factor EcfA family. As to quaternary structure, forms a stable energy-coupling factor (ECF) transporter complex composed of 2 membrane-embedded substrate-binding proteins (S component), 2 ATP-binding proteins (A component) and 2 transmembrane proteins (T component).

The protein resides in the cell membrane. In terms of biological role, ATP-binding (A) component of a common energy-coupling factor (ECF) ABC-transporter complex. Unlike classic ABC transporters this ECF transporter provides the energy necessary to transport a number of different substrates. The polypeptide is Energy-coupling factor transporter ATP-binding protein EcfA2 (Staphylococcus epidermidis (strain ATCC 12228 / FDA PCI 1200)).